The sequence spans 398 residues: Circumsporozoite protein (398 aa).

A signal peptide spans 1-23 (MKNFNLLAVSSILLVDLFRTQWG). The tract at residues 50-110 (AQVRQSASRG…AAAGEAGNNA (61 aa)) is disordered. Residues 66 to 93 (PKNEEGADKPKKKDEKQVEPKKPRENKL) show a composition bias toward basic and acidic residues. The segment at 81-89 (KQVEPKKPR) is required for the binding to heparan sulfate proteoglycans (HSPGs) on the surface of host hepatocytes. The interval 92–96 (KLKQP) is region I; contains the proteolytic cleavage site. 19 repeat units span residues 97-105 (AGNNAAAGE), 106-114 (AGNNAAAGE), 115-123 (AGNNAAAGE), 124-132 (AGNNAAAGE), 133-141 (AGNNAAAGE), 142-150 (AGNNAAAGE), 151-159 (AGNNAAGGA), 160-168 (AGNNAAGGE), 169-177 (AGNNAAGGA), 178-186 (AGNNAAAGE), 187-195 (AGNNAAGGE), 196-204 (AGNNAAAGE), 205-213 (AGNNAAGGA), 214-222 (AGNNAAAGE), 223-231 (AGNNAAAGA), 232-240 (AGNNAAAGA), 241-257 (AGNN…GAGR), 258-274 (AGNN…GAGR), and 275-291 (AGNN…GAGG). The segment covering 97–110 (AGNNAAAGEAGNNA) has biased composition (low complexity). The tract at residues 97–240 (AGNNAAAGEA…AAGNNAAAGA (144 aa)) is 16 X 9 AA tandem repeats of A-G-N-N-A-A-[AG]-G-[EA]. The tract at residues 241–291 (AGNNAAAGEAGAGGAGRAGNNAAAGEAGAGGAGRAGNNAAAGEAGAGGAGG) is 3 X 17 AA tandem repeats of A-G-N-N-A-A-A-G-E-A-G-A-G-G-A-G-[RG]. The segment at 248–310 (GEAGAGGAGR…AGQGQNNGGA (63 aa)) is disordered. Over residues 284–293 (AGAGGAGGNA) the composition is skewed to gly residues. Positions 324 to 376 (KIRSTIGVEWSPCSVTCGKGVRMRRKVNAANKKPEELDANDLETEVCTMDKCA) constitute a TSP type-1 domain. Intrachain disulfides connect cysteine 336/cysteine 370 and cysteine 340/cysteine 375. A glycan (O-linked (Fuc) threonine) is linked at threonine 339. Cysteine 375 carries the GPI-anchor amidated cysteine lipid modification. A propeptide spans 376–398 (AGIFNVVSNSLGLVILLVLALFN) (removed in mature form).

Belongs to the plasmodium circumsporozoite protein family. During host cell invasion, proteolytically cleaved at the cell membrane in the region I by a papain-like cysteine protease of parasite origin. Cleavage is triggered by the sporozoite contact with highly sulfated heparan sulfate proteoglycans (HSPGs) present on the host hepatocyte cell surface. Cleavage exposes the TSP type-1 (TSR) domain and is required for productive invasion of host hepatocytes but not for adhesion to the host cell membrane. Cleavage is dispensable for sporozoite development in the oocyst, motility and for traversal of host and vector cells. Post-translationally, O-glycosylated; maybe by POFUT2.

It is found in the cell membrane. It localises to the cytoplasm. In terms of biological role, essential sporozoite protein. In the mosquito vector, required for sporozoite development in the oocyst, migration through the vector hemolymph and entry into the vector salivary glands. In the vertebrate host, required for sporozoite migration through the host dermis and infection of host hepatocytes. Binds to highly sulfated heparan sulfate proteoglycans (HSPGs) on the surface of host hepatocytes. In the vertebrate host, binds to highly sulfated heparan sulfate proteoglycans (HSPGs) on the surface of host hepatocytes and is required for sporozoite invasion of the host hepatocytes. This is Circumsporozoite protein from Plasmodium cynomolgi (strain Ceylon).